The chain runs to 108 residues: Cytochrome c (108 aa).

4 residues coordinate heme c: C19, C22, H23, and M85.

This sequence belongs to the cytochrome c family. In terms of processing, binds 1 heme c group covalently per subunit.

It is found in the mitochondrion intermembrane space. Electron carrier protein. The oxidized form of the cytochrome c heme group can accept an electron from the heme group of the cytochrome c1 subunit of cytochrome reductase. Cytochrome c then transfers this electron to the cytochrome oxidase complex, the final protein carrier in the mitochondrial electron-transport chain. This chain is Cytochrome c, found in Cochliobolus lunatus (Filamentous fungus).